The chain runs to 596 residues: Merlin (596 aa).

Ser-13 is modified (phosphoserine). The region spanning 22-311 (FTVRIVTMDA…GNHDLFMRRR (290 aa)) is the FERM domain. Position 518 is a phosphoserine; by PAK (Ser-518). Residues 560-580 (VLHSESSDRGGPSSKHNTIKK) form a disordered region.

In terms of assembly, interacts with NHERF1, HGS and AGAP2. Interacts with SGSM3. Interacts (via FERM domain) with MPP1. Interacts with LAYN. Interacts with WWC1. Interacts with the CUL4A-RBX1-DDB1-VprBP/DCAF1 E3 ubiquitin-protein ligase complex. The unphosphorylated form interacts (via FERM domain) with VPRBP/DCAF1. Interacts (via FERM domain) with NOP53; the interaction is direct. Interacts with SCHIP1; the interaction is direct. Post-translationally, phosphorylation of Ser-518 inhibits nuclear localization by disrupting the intramolecular association of the FERM domain with the C-terminal tail. The dephosphorylation of Ser-518 favors the interaction with NOP53. Ubiquitinated by the CUL4A-RBX1-DDB1-DCAF1/VprBP E3 ubiquitin-protein ligase complex for ubiquitination and subsequent proteasome-dependent degradation.

The protein resides in the cell membrane. It localises to the cell projection. The protein localises to the cytoplasm. It is found in the cytoskeleton. Its subcellular location is the nucleus. Its function is as follows. Probable regulator of the Hippo/SWH (Sav/Wts/Hpo) signaling pathway, a signaling pathway that plays a pivotal role in tumor suppression by restricting proliferation and promoting apoptosis. Along with WWC1 can synergistically induce the phosphorylation of LATS1 and LATS2 and can probably function in the regulation of the Hippo/SWH (Sav/Wts/Hpo) signaling pathway. May act as a membrane stabilizing protein. May inhibit PI3 kinase by binding to AGAP2 and impairing its stimulating activity. Suppresses cell proliferation and tumorigenesis by inhibiting the CUL4A-RBX1-DDB1-VprBP/DCAF1 E3 ubiquitin-protein ligase complex. Plays a role in lens development and is required for complete fiber cell terminal differentiation, maintenance of cell polarity and separation of the lens vesicle from the corneal epithelium. The polypeptide is Merlin (Nf2) (Mus musculus (Mouse)).